The chain runs to 727 residues: Putative E3 ubiquitin-protein ligase UNKL (727 aa).

The interval Met-1–Lys-21 is disordered. 4 consecutive C3H1-type zinc fingers follow at residues Tyr-75–Thr-104, Tyr-115–Leu-145, Gln-243–Thr-277, and Ile-285–Lys-313. The span at Ser-330–Gly-339 shows a compositional bias: polar residues. 3 disordered regions span residues Ser-330–Gln-360, Leu-446–Gly-514, and Ser-543–Ser-562. The segment covering Ser-463–Ser-495 has biased composition (low complexity). Residues Cys-686–Lys-721 form an RING-type zinc finger.

It belongs to the unkempt family. As to quaternary structure, interacts with the GTP-bound form of Rac1. Interacts with Baf60b/Smarcd2. Ubiquitination is enhanced by activated Rac1. The presence of the RING finger domain is not essential for ubiquitination to occur. Ubiquitous.

The protein resides in the cytoplasm. It localises to the nucleus. It participates in protein modification; protein ubiquitination. Its function is as follows. May participate in a protein complex showing an E3 ligase activity regulated by Rac1. Ubiquitination is directed towards itself and possibly other substrates, such as Baf60b/Smarcd2. Intrinsic E3 ligase activity has not been proven. This Mus musculus (Mouse) protein is Putative E3 ubiquitin-protein ligase UNKL (Unkl).